A 473-amino-acid polypeptide reads, in one-letter code: Cell division protein FtsP (473 aa).

Residues 1-27 (MSFSRRQFLQASGLAVCLGSLSSSVRA) constitute a signal peptide (tat-type signal).

The protein belongs to the FtsP family. Post-translationally, predicted to be exported by the Tat system. The position of the signal peptide cleavage has not been experimentally proven.

It is found in the periplasm. Its function is as follows. Cell division protein that is required for growth during stress conditions. May be involved in protecting or stabilizing the divisomal assembly under conditions of stress. The polypeptide is Cell division protein FtsP (Proteus mirabilis (strain HI4320)).